A 484-amino-acid polypeptide reads, in one-letter code: Fork head protein homolog 1 (484 aa).

The FHA domain occupies 76–142 (VTIGRNTDSL…NGAKVNFRRI (67 aa)). The segment at residues 302–393 (IKPPQSYASM…RRDFLNKWNA (92 aa)) is a DNA-binding region (fork-head).

Interacts (via FHA domain) with ECM30, GLN3, URE2, MPH1 AND FDO1. Interacts with the origin recognition complex (ORC) composed of ORC1 to ORC6.

The protein localises to the nucleus. Its subcellular location is the cytoplasm. The protein resides in the cytosol. In terms of biological role, transcription factor that regulates the expression of the CLB2 cluster of genes during the G2/M phase of the mitotic cell cycle. The CLB2 cluster of genes includes mitotic regulators such as CLB1, CLB2, CDC5 and CDC20 as well as SWI5 and ACE2, transcription factors required for the subsequent temporal wave of cell cycle regulated gene expression in the M/G1 phase interval. Involved in HMRa silencing. FKH1 and FKH2 associate with the coding regions of active genes and influence, in opposing ways, transcriptional elongation and termination, and coordinate early transcription elongation and pre-mRNA processing. Both FKH1 and FKH2 play a role as regulators of lifespan in collaboration with the anaphase-promoting complex (APC), likely through combined regulation of stress response, genomic stability, and cell cycle regulation. FKH1 and FKH2 function also in controlling yeast cell morphology by preventing preudohyphal growth. Acts as a rate-limiting replication origin activator via its interaction with the origin recognition complex (ORC). Plays a transcription-independent role in recombination donor preference during mating-type switching through binding to the recombination enhancer (RE), a 700-bp cis-acting element that controls recombination along the left arm of chromosome III. The sequence is that of Fork head protein homolog 1 from Saccharomyces cerevisiae (strain ATCC 204508 / S288c) (Baker's yeast).